Consider the following 296-residue polypeptide: Sulfotransferase 1C2 (296 aa).

Residue 49-54 (KSGTTW) coordinates 3'-phosphoadenylyl sulfate. Residue 107–109 (RTH) coordinates substrate. His109 serves as the catalytic Proton acceptor. Residues Arg131, Ser139, Tyr194, and 228–233 (TSFEKM) contribute to the 3'-phosphoadenylyl sulfate site. At Ser139 the chain carries Phosphoserine. Ser254 bears the Phosphoserine mark. 256–260 (FMRKG) serves as a coordination point for 3'-phosphoadenylyl sulfate.

This sequence belongs to the sulfotransferase 1 family. As to expression, highly expressed in kidney and at lower levels in stomach and liver. More specifically found in the epithelia of proximal tubules of the kidney, of the bile duct, of the gastric mucosa, and in hepatocytes.

The protein localises to the cytoplasm. The protein resides in the lysosome. It localises to the mitochondrion. The catalysed reaction is a phenol + 3'-phosphoadenylyl sulfate = an aryl sulfate + adenosine 3',5'-bisphosphate + H(+). It carries out the reaction cholesterol + 3'-phosphoadenylyl sulfate = cholesterol sulfate + adenosine 3',5'-bisphosphate + H(+). In terms of biological role, sulfotransferase that utilizes 3'-phospho-5'-adenylyl sulfate (PAPS) to catalyze the sulfate conjugation of phenolic compounds. Does not transfer sulfate to steroids, dopamine, acetaminophen, or alpha-naphthol. Except in mitochondria, where it can add sulfate to cholesterol producing cholesterol sulfate, which alters mitochondrial membrane organization, and impacts protein complex mobility increasing state-III respiration, thereby modulating mitochondrial respiration. Catalyzes the sulfation of the carcinogenic N-hydroxy-2-acetylaminofluorene leading to highly reactive intermediates capable of forming DNA adducts, potentially resulting in mutagenesis. In Rattus norvegicus (Rat), this protein is Sulfotransferase 1C2 (Sult1c2).